The primary structure comprises 228 residues: Large ribosomal subunit protein uL3 (228 aa).

Position 151 is an N5-methylglutamine (Q151).

Belongs to the universal ribosomal protein uL3 family. As to quaternary structure, part of the 50S ribosomal subunit. Forms a cluster with proteins L14 and L19. Post-translationally, methylated by PrmB.

Its function is as follows. One of the primary rRNA binding proteins, it binds directly near the 3'-end of the 23S rRNA, where it nucleates assembly of the 50S subunit. This is Large ribosomal subunit protein uL3 from Rhizobium meliloti (strain 1021) (Ensifer meliloti).